A 152-amino-acid chain; its full sequence is Endoribonuclease YbeY (152 aa).

The Zn(2+) site is built by histidine 118, histidine 122, and histidine 128.

This sequence belongs to the endoribonuclease YbeY family. It depends on Zn(2+) as a cofactor.

The protein resides in the cytoplasm. Single strand-specific metallo-endoribonuclease involved in late-stage 70S ribosome quality control and in maturation of the 3' terminus of the 16S rRNA. This is Endoribonuclease YbeY from Pelotomaculum thermopropionicum (strain DSM 13744 / JCM 10971 / SI).